Here is a 446-residue protein sequence, read N- to C-terminus: Lysine histidine transporter 1 (446 aa).

The Cytoplasmic portion of the chain corresponds to 1 to 37 (MVAQAPHDDHQDDEKLAAARQKEIEDWLPITSSRNAK). A helical transmembrane segment spans residues 38–58 (WWYSAFHNVTAMVGAGVLGLP). Residues 59–63 (YAMSQ) lie on the Extracellular side of the membrane. Residues 64 to 84 (LGWGPGIAVLVLSWVITLYTL) traverse the membrane as a helical segment. Residues 85–115 (WQMVEMHEMVPGKRFDRYHELGQHAFGEKLG) are Cytoplasmic-facing. Residues 116-136 (LYIVVPQQLIVEIGVCIVYMV) form a helical membrane-spanning segment. Topologically, residues 137 to 157 (TGGKSLKKFHELVCDDCKPIK) are extracellular. A helical transmembrane segment spans residues 158 to 178 (LTYFIMIFASVHFVLSHLPNF). The Cytoplasmic segment spans residues 179–180 (NS). A helical transmembrane segment spans residues 181–201 (ISGVSLAAAVMSLSYSTIAWA). Over 202–227 (SSASKGVQEDVQYGYKAKTTAGTVFN) the chain is Extracellular. Residues 228-248 (FFSGLGDVAFAYAGHNVVLEI) traverse the membrane as a helical segment. Residues 249-268 (QATIPSTPEKPSKGPMWRGV) lie on the Cytoplasmic side of the membrane. The helical transmembrane segment at 269-289 (IVAYIVVALCYFPVALVGYYI) threads the bilayer. Topologically, residues 290 to 305 (FGNGVEDNILMSLKKP) are extracellular. A helical transmembrane segment spans residues 306–326 (AWLIATANIFVVIHVIGSYQI). At 327 to 352 (YAMPVFDMMETLLVKKLNFRPTTTLR) the chain is on the cytoplasmic side. The helical transmembrane segment at 353 to 375 (FFVRNFYVAATMFVGMTFPFFGG) threads the bilayer. Topologically, residues 376–378 (LLA) are extracellular. Residues 379–401 (FFGGFAFAPTTYFLPCVIWLAIY) form a helical membrane-spanning segment. Over 402-409 (KPKKYSLS) the chain is Cytoplasmic. A helical transmembrane segment spans residues 410–430 (WWANWVCIVFGLFLMVLSPIG). Residues 431–446 (GLRTIVIQAKGYKFYS) lie on the Extracellular side of the membrane.

It belongs to the amino acid/polyamine transporter 2 family. Amino acid/auxin permease (AAAP) (TC 2.A.18.2) subfamily. In terms of tissue distribution, expressed in roots, stems, flowers, leaves, siliques and pollen. Found in the tips of roots and in the rhizodermis of emerging roots and in lateral roots. Higher expression in older leaves as compared to joung leaves. Detected first at the hydathodes, then in the epidermis and finally in matures leaves in all mesophyll cells. Not detected in vascular bundles or in seeds.

It is found in the cell membrane. Its activity is regulated as follows. Inhibited by carbonlycyanide m-chlorophenylhydrazone (CCCP) and DEPC. Functionally, amino acid-proton symporter. Transporter with a broad specificity for histidine, lysine, glutamic acid, alanine, serine, proline and glycine. Involved in both apoplastic transport of amino acids in leaves and their uptake by roots. This is Lysine histidine transporter 1 (LHT1) from Arabidopsis thaliana (Mouse-ear cress).